A 55-amino-acid chain; its full sequence is Large ribosomal subunit protein bL33 (55 aa).

Belongs to the bacterial ribosomal protein bL33 family.

The sequence is that of Large ribosomal subunit protein bL33 from Agrobacterium fabrum (strain C58 / ATCC 33970) (Agrobacterium tumefaciens (strain C58)).